Consider the following 96-residue polypeptide: Cystatin (96 aa).

The Cystatin domain occupies 22–65; that stretch reads DFIKAALNETGTHAGRKYKVLRSSQQVVAGMKYTFYIVFEDDES. Residue Asn-29 is glycosylated (N-linked (GlcNAc...) asparagine).

The protein belongs to the cystatin family. In terms of assembly, interacts with cathepsin L-like peptidase; the interaction results in inhibition of cathepsin L-like peptidase activity. As to expression, salivary gland. Midgut.

In terms of biological role, cysteine proteinase inhibitor. Inhibits cathepsin L-like peptidase. Increases cell viability following apoptosis induction by staurosporine. Inhibits human cathepsin S (CTSS), human cathepsin L2 (CTSV), human cathepsin L (CTSL), human cathepsin B (CTSB) and papain. Its function is as follows. (Microbial infection) Modulates dengue virus type 2 replication in salivary glands. This is Cystatin from Aedes aegypti (Yellowfever mosquito).